The chain runs to 905 residues: Protein translocase subunit SecA (905 aa).

ATP-binding positions include Gln87, 105-109 (GEGKT), and Asp509. Residues Cys890, Cys892, Cys901, and His902 each coordinate Zn(2+).

It belongs to the SecA family. Monomer and homodimer. Part of the essential Sec protein translocation apparatus which comprises SecA, SecYEG and auxiliary proteins SecDF-YajC and YidC. It depends on Zn(2+) as a cofactor.

It is found in the cell inner membrane. Its subcellular location is the cytoplasm. The catalysed reaction is ATP + H2O + cellular proteinSide 1 = ADP + phosphate + cellular proteinSide 2.. Its function is as follows. Part of the Sec protein translocase complex. Interacts with the SecYEG preprotein conducting channel. Has a central role in coupling the hydrolysis of ATP to the transfer of proteins into and across the cell membrane, serving both as a receptor for the preprotein-SecB complex and as an ATP-driven molecular motor driving the stepwise translocation of polypeptide chains across the membrane. This chain is Protein translocase subunit SecA, found in Acinetobacter baylyi (strain ATCC 33305 / BD413 / ADP1).